The sequence spans 338 residues: Tetraacyldisaccharide 4'-kinase (338 aa).

49 to 56 lines the ATP pocket; it reads TVGGTGKT.

It belongs to the LpxK family.

The catalysed reaction is a lipid A disaccharide + ATP = a lipid IVA + ADP + H(+). The protein operates within glycolipid biosynthesis; lipid IV(A) biosynthesis; lipid IV(A) from (3R)-3-hydroxytetradecanoyl-[acyl-carrier-protein] and UDP-N-acetyl-alpha-D-glucosamine: step 6/6. Its function is as follows. Transfers the gamma-phosphate of ATP to the 4'-position of a tetraacyldisaccharide 1-phosphate intermediate (termed DS-1-P) to form tetraacyldisaccharide 1,4'-bis-phosphate (lipid IVA). The polypeptide is Tetraacyldisaccharide 4'-kinase (Geobacter metallireducens (strain ATCC 53774 / DSM 7210 / GS-15)).